The chain runs to 456 residues: Toxin CfTX-1 (456 aa).

Residues 1–20 (MVKMLFFAFLPLLFMTGIAA) form the signal peptide.

It belongs to the jellyfish toxin family. Type I subfamily. In terms of assembly, oligomer. Contains disulfide bonds. As to expression, nematocytes.

The protein localises to the secreted. It is found in the nematocyst. Its subcellular location is the target cell membrane. Functionally, may cause profound effects on the cardiovascular system of anesthetized rats (at 25 ug/kg), since the fraction containing this toxin and CfTX-2 produces an initial increase in mean arterial pressure, followed by cardiovascular collapse in all animals within 1 minute of injection. To note, the same fraction does not induce significant change in heart rate. Has weak hemolytic activity. Is lethal to crayfish. Causes cutaneous inflammation in humans. May act as a pore-forming toxin, disrupting normal transmembrane ion concentration gradients in susceptible cells. The sequence is that of Toxin CfTX-1 from Chironex fleckeri (Australian box jellyfish).